The following is a 391-amino-acid chain: Anhydro-N-acetylmuramic acid kinase (391 aa).

9–16 (GTSYDAVE) lines the ATP pocket.

The protein belongs to the anhydro-N-acetylmuramic acid kinase family.

The enzyme catalyses 1,6-anhydro-N-acetyl-beta-muramate + ATP + H2O = N-acetyl-D-muramate 6-phosphate + ADP + H(+). It functions in the pathway amino-sugar metabolism; 1,6-anhydro-N-acetylmuramate degradation. Its pathway is cell wall biogenesis; peptidoglycan recycling. Catalyzes the specific phosphorylation of 1,6-anhydro-N-acetylmuramic acid (anhMurNAc) with the simultaneous cleavage of the 1,6-anhydro ring, generating MurNAc-6-P. Is required for the utilization of anhMurNAc either imported from the medium or derived from its own cell wall murein, and thus plays a role in cell wall recycling. The polypeptide is Anhydro-N-acetylmuramic acid kinase (Streptomyces coelicolor (strain ATCC BAA-471 / A3(2) / M145)).